Here is a 658-residue protein sequence, read N- to C-terminus: UvrABC system protein B (658 aa).

The Helicase ATP-binding domain occupies 25-182 (DSIRSGNKFN…LKLVDMGYKR (158 aa)). 38–45 (GVTGSGKT) serves as a coordination point for ATP. The Beta-hairpin motif lies at 91 to 114 (YYDYYQPEAYIPRQDLFIEKDSSI). Residues 433–596 (QVEVLFDRAK…TPRSASRNLE (164 aa)) enclose the Helicase C-terminal domain. One can recognise a UVR domain in the interval 623-658 (AKIVKELRKQMLEAAKNLEFEKAAALRDEIAKLREL).

This sequence belongs to the UvrB family. Forms a heterotetramer with UvrA during the search for lesions. Interacts with UvrC in an incision complex.

The protein localises to the cytoplasm. Its function is as follows. The UvrABC repair system catalyzes the recognition and processing of DNA lesions. A damage recognition complex composed of 2 UvrA and 2 UvrB subunits scans DNA for abnormalities. Upon binding of the UvrA(2)B(2) complex to a putative damaged site, the DNA wraps around one UvrB monomer. DNA wrap is dependent on ATP binding by UvrB and probably causes local melting of the DNA helix, facilitating insertion of UvrB beta-hairpin between the DNA strands. Then UvrB probes one DNA strand for the presence of a lesion. If a lesion is found the UvrA subunits dissociate and the UvrB-DNA preincision complex is formed. This complex is subsequently bound by UvrC and the second UvrB is released. If no lesion is found, the DNA wraps around the other UvrB subunit that will check the other stand for damage. The chain is UvrABC system protein B from Campylobacter fetus subsp. fetus (strain 82-40).